Reading from the N-terminus, the 376-residue chain is DNA replication and repair protein RecF (376 aa).

Position 35-42 (35-42 (GDNGSGKT)) interacts with ATP.

It belongs to the RecF family.

It is found in the cytoplasm. The RecF protein is involved in DNA metabolism; it is required for DNA replication and normal SOS inducibility. RecF binds preferentially to single-stranded, linear DNA. It also seems to bind ATP. In Agrobacterium fabrum (strain C58 / ATCC 33970) (Agrobacterium tumefaciens (strain C58)), this protein is DNA replication and repair protein RecF.